The following is a 613-amino-acid chain: Ribosome-associated molecular chaperone SSB1 (613 aa).

The tract at residues 1–391 (MAEGVFPGAI…ILTGQSTSDE (391 aa)) is nucleotide binding domain (NBD). ATP is bound by residues 16-18 (TTY), K73, 205-207 (GGT), 271-278 (ERAKRTLS), and G342. Residues 392-402 (TKDLLLLDVAP) form an inter-domain linker region. The interval 403-613 (LSLGVGMAGD…RAVTKAMSTR (211 aa)) is substrate binding domain (SBD). A lid domain (SBDalpha) region spans residues 516 to 612 (SEEIEQMVNQ…KRAVTKAMST (97 aa)). A Nuclear export signal motif is present at residues 574-582 (VEAALADAF).

This sequence belongs to the heat shock protein 70 family. Ssb-type Hsp70 subfamily. Binds to ribosomes. Binds close to the ribosomal tunnel exit via contacts with both ribosomal proteins and rRNA. Directly interacts with nascent polypeptides. This interaction is dependent on the ribosome-associated complex (RAC). Interacts with SSE1. Interacts with FES1.

The protein resides in the cytoplasm. The enzyme catalyses ATP + H2O = ADP + phosphate + H(+). Functionally, ribosome-bound, Hsp70-type chaperone that assists in the cotranslational folding of newly synthesized proteins in the cytosol. Stimulates folding by interacting with nascent chains, binding to short, largely hydrophobic sequences exposed by unfolded proteins, thereby stabilizing longer, more slowly translated, and aggregation-prone nascent polypeptides and domains that cannot fold stably until fully synthesized. The Hsp70-protein substrate interaction depends on ATP-binding and on allosteric regulation between the NBD and the SBD. The ATP-bound state is characterized by a fast exchange rate of substrate (low affinity state), while in the ADP-bound state exchange is much slower (high affinity state). During the Hsp70 cycle, the chaperone switches between the ATP-bound state (open conformation) and the ADP-bound state (closed conformation) by major conformational rearrangements involving mainly the lid domain. Ssb cooperates with a specific Hsp40/Hsp70 co-chaperone termed the ribosome-associated complex (RAC), which stimulates the ATPase activity of the ribosome-associated pool of Ssbs and switches it to the high affinity substrate binding state. Hsp110 chaperone SSE1 and FES1 act as nucleotide exchange factors that cause substrate release. The chain is Ribosome-associated molecular chaperone SSB1 (SSB1) from Kluyveromyces marxianus (Yeast).